A 127-amino-acid polypeptide reads, in one-letter code: Aspartate 1-decarboxylase (127 aa).

The active-site Schiff-base intermediate with substrate; via pyruvic acid is the Ser-25. A Pyruvic acid (Ser) modification is found at Ser-25. Thr-57 serves as a coordination point for substrate. The active-site Proton donor is the Tyr-58. Residue 73–75 (GAA) participates in substrate binding.

It belongs to the PanD family. As to quaternary structure, heterooctamer of four alpha and four beta subunits. It depends on pyruvate as a cofactor. Is synthesized initially as an inactive proenzyme, which is activated by self-cleavage at a specific serine bond to produce a beta-subunit with a hydroxyl group at its C-terminus and an alpha-subunit with a pyruvoyl group at its N-terminus.

It is found in the cytoplasm. The catalysed reaction is L-aspartate + H(+) = beta-alanine + CO2. It functions in the pathway cofactor biosynthesis; (R)-pantothenate biosynthesis; beta-alanine from L-aspartate: step 1/1. Catalyzes the pyruvoyl-dependent decarboxylation of aspartate to produce beta-alanine. This is Aspartate 1-decarboxylase from Clostridium kluyveri (strain NBRC 12016).